Here is a 363-residue protein sequence, read N- to C-terminus: Holliday junction branch migration complex subunit RuvB (363 aa).

The disordered stretch occupies residues 1–23 (MHKDEDQRLLGPAPLPNDPDRSL). Residues 1-184 (MHKDEDQRLL…FGIPIRLNFY (184 aa)) form a large ATPase domain (RuvB-L) region. ATP-binding positions include L23, R24, G65, K68, T69, T70, 131-133 (EDY), R174, Y184, and R221. T69 contacts Mg(2+). Residues 185-255 (TIEELEYIVQ…IADEALSRLE (71 aa)) are small ATPAse domain (RuvB-S). Residues 258–363 (HLGLDPLDRR…QTTLWDGEDD (106 aa)) are head domain (RuvB-H). Positions 294, 313, and 318 each coordinate DNA.

It belongs to the RuvB family. Homohexamer. Forms an RuvA(8)-RuvB(12)-Holliday junction (HJ) complex. HJ DNA is sandwiched between 2 RuvA tetramers; dsDNA enters through RuvA and exits via RuvB. An RuvB hexamer assembles on each DNA strand where it exits the tetramer. Each RuvB hexamer is contacted by two RuvA subunits (via domain III) on 2 adjacent RuvB subunits; this complex drives branch migration. In the full resolvosome a probable DNA-RuvA(4)-RuvB(12)-RuvC(2) complex forms which resolves the HJ.

It is found in the cytoplasm. It catalyses the reaction ATP + H2O = ADP + phosphate + H(+). The RuvA-RuvB-RuvC complex processes Holliday junction (HJ) DNA during genetic recombination and DNA repair, while the RuvA-RuvB complex plays an important role in the rescue of blocked DNA replication forks via replication fork reversal (RFR). RuvA specifically binds to HJ cruciform DNA, conferring on it an open structure. The RuvB hexamer acts as an ATP-dependent pump, pulling dsDNA into and through the RuvAB complex. RuvB forms 2 homohexamers on either side of HJ DNA bound by 1 or 2 RuvA tetramers; 4 subunits per hexamer contact DNA at a time. Coordinated motions by a converter formed by DNA-disengaged RuvB subunits stimulates ATP hydrolysis and nucleotide exchange. Immobilization of the converter enables RuvB to convert the ATP-contained energy into a lever motion, pulling 2 nucleotides of DNA out of the RuvA tetramer per ATP hydrolyzed, thus driving DNA branch migration. The RuvB motors rotate together with the DNA substrate, which together with the progressing nucleotide cycle form the mechanistic basis for DNA recombination by continuous HJ branch migration. Branch migration allows RuvC to scan DNA until it finds its consensus sequence, where it cleaves and resolves cruciform DNA. This is Holliday junction branch migration complex subunit RuvB from Bartonella tribocorum (strain CIP 105476 / IBS 506).